We begin with the raw amino-acid sequence, 971 residues long: uncharacterized protein (971 aa).

Positions 1–24 are cleaved as a signal peptide; that stretch reads MQSNLLKVLGVLAIVATLVCFIFA. A disordered region spans residues 127–146; sequence RTRPGKSNLDDSNQMIPIPR. The next 6 membrane-spanning stretches (helical) occupy residues 611 to 631, 721 to 741, 753 to 773, 795 to 815, 832 to 852, and 865 to 885; these read IKAI…LGFA, LGLS…IVII, AFMA…FLLF, VVMM…LDFV, FIGT…INWF, and GVNM…YGYV. Residues 933-944 are compositionally biased toward basic residues; the sequence is TSRAKSRLKQRN. The interval 933-971 is disordered; it reads TSRAKSRLKQRNRTLEHAEQNSKKYMKKIGENTNEGTLK. The segment covering 945 to 954 has biased composition (basic and acidic residues); that stretch reads RTLEHAEQNS.

It belongs to the TrbL/VirB6 family.

The protein resides in the cell membrane. This is an uncharacterized protein from Rickettsia typhi (strain ATCC VR-144 / Wilmington).